The sequence spans 417 residues: Serine hydroxymethyltransferase (417 aa).

Residues Leu121 and 125–127 each bind (6S)-5,6,7,8-tetrahydrofolate; that span reads GHL. At Lys229 the chain carries N6-(pyridoxal phosphate)lysine. 355–357 is a binding site for (6S)-5,6,7,8-tetrahydrofolate; that stretch reads SPF.

This sequence belongs to the SHMT family. In terms of assembly, homodimer. Pyridoxal 5'-phosphate is required as a cofactor.

It is found in the cytoplasm. The catalysed reaction is (6R)-5,10-methylene-5,6,7,8-tetrahydrofolate + glycine + H2O = (6S)-5,6,7,8-tetrahydrofolate + L-serine. Its pathway is one-carbon metabolism; tetrahydrofolate interconversion. It participates in amino-acid biosynthesis; glycine biosynthesis; glycine from L-serine: step 1/1. Catalyzes the reversible interconversion of serine and glycine with tetrahydrofolate (THF) serving as the one-carbon carrier. This reaction serves as the major source of one-carbon groups required for the biosynthesis of purines, thymidylate, methionine, and other important biomolecules. Also exhibits THF-independent aldolase activity toward beta-hydroxyamino acids, producing glycine and aldehydes, via a retro-aldol mechanism. The sequence is that of Serine hydroxymethyltransferase from Xylella fastidiosa (strain M23).